Consider the following 529-residue polypeptide: UDP-glucuronosyltransferase 2B11 (529 aa).

The signal sequence occupies residues 1–21; it reads MTLKWTSVLLLIHLSCYFSSG. K135 is subject to N6-succinyllysine. A glycan (N-linked (GlcNAc...) asparagine) is linked at N315. The helical transmembrane segment at 493–513 threads the bilayer; the sequence is VIGFLLACVATVIFIITKFCL.

This sequence belongs to the UDP-glycosyltransferase family. In terms of tissue distribution, widely expressed.

It localises to the microsome membrane. The protein resides in the endoplasmic reticulum membrane. The enzyme catalyses glucuronate acceptor + UDP-alpha-D-glucuronate = acceptor beta-D-glucuronoside + UDP + H(+). In terms of biological role, UDPGT is of major importance in the conjugation and subsequent elimination of potentially toxic xenobiotics and endogenous compounds. The protein is UDP-glucuronosyltransferase 2B11 (UGT2B11) of Homo sapiens (Human).